A 579-amino-acid polypeptide reads, in one-letter code: Plastidial pyruvate kinase 2 (579 aa).

Residues Met1 to Arg63 constitute a chloroplast transit peptide. Residues Ala6–Thr24 show a composition bias toward polar residues. Residues Ala6 to Ser26 are disordered. A substrate-binding site is contributed by Arg140. Residues Asn142, Ser144, Asp175, and Thr176 each contribute to the K(+) site. Asn142 to His145 is an ATP binding site. Arg182 lines the ATP pocket. Lys325 provides a ligand contact to substrate. Residue Glu327 coordinates Mg(2+). Substrate-binding residues include Gly350, Asp351, and Thr383. Asp351 is a Mg(2+) binding site.

This sequence belongs to the pyruvate kinase family. As to quaternary structure, oligomer of alpha and beta subunits. Mg(2+) serves as cofactor. The cofactor is K(+). As to expression, mostly expressed in seeds, and, to a lower extent, in roots, leaves (veins and trichomes), inflorescences, siliques, pollen (grains and tubes) and flowers (sepals and petals).

Its subcellular location is the plastid. It is found in the chloroplast stroma. It localises to the mitochondrion. It carries out the reaction pyruvate + ATP = phosphoenolpyruvate + ADP + H(+). Its pathway is carbohydrate degradation; glycolysis; pyruvate from D-glyceraldehyde 3-phosphate: step 5/5. Functionally, required for plastidial pyruvate kinase activity. Involved in seed oil accumulation, embryo development and seed storage compounds mobilization upon germination. The protein is Plastidial pyruvate kinase 2 (PKP2) of Arabidopsis thaliana (Mouse-ear cress).